The sequence spans 422 residues: Glutamate-1-semialdehyde 2,1-aminomutase (422 aa).

Lys264 is modified (N6-(pyridoxal phosphate)lysine).

This sequence belongs to the class-III pyridoxal-phosphate-dependent aminotransferase family. HemL subfamily. As to quaternary structure, homodimer. Pyridoxal 5'-phosphate is required as a cofactor.

The protein localises to the cytoplasm. It carries out the reaction (S)-4-amino-5-oxopentanoate = 5-aminolevulinate. Its pathway is porphyrin-containing compound metabolism; protoporphyrin-IX biosynthesis; 5-aminolevulinate from L-glutamyl-tRNA(Glu): step 2/2. The polypeptide is Glutamate-1-semialdehyde 2,1-aminomutase (Clostridium kluyveri (strain ATCC 8527 / DSM 555 / NBRC 12016 / NCIMB 10680 / K1)).